A 165-amino-acid chain; its full sequence is UPF0262 protein Sala_0765 (165 aa).

This sequence belongs to the UPF0262 family.

In Sphingopyxis alaskensis (strain DSM 13593 / LMG 18877 / RB2256) (Sphingomonas alaskensis), this protein is UPF0262 protein Sala_0765.